The primary structure comprises 314 residues: Solute carrier family 25 member 44 (314 aa).

Solcar repeat units follow at residues 18–100 (KKFY…TRKF), 107–210 (SNTV…YAEQ), and 220–302 (PHIV…LKKL). 6 helical membrane-spanning segments follow: residues 20 to 42 (FYVF…TLIR), 71 to 90 (AGLY…GQCY), 113 to 133 (LVAG…IDVV), 185 to 201 (GYVA…AVWW), 222 to 239 (IVFQ…ASIL), and 278 to 296 (LSAR…VVGY).

Belongs to the mitochondrial carrier (TC 2.A.29) family. In terms of tissue distribution, highly expressed in brown adipose tissues compared with other metabolic organs.

The protein resides in the mitochondrion membrane. It catalyses the reaction L-valine(in) = L-valine(out). The enzyme catalyses L-leucine(in) = L-leucine(out). Mitochondrial solute transporter which transports branched-chain amino acid (BCAA; valine, leucine and isoleucine) into mitochondria in brown adipose tissue (BAT). BAT is involved in BCAA catabolism and actively utilizes BCAA in the mitochondria for thermogenesis. This Mus musculus (Mouse) protein is Solute carrier family 25 member 44.